The chain runs to 256 residues: Thiazole synthase (256 aa).

Catalysis depends on Lys-95, which acts as the Schiff-base intermediate with DXP. 1-deoxy-D-xylulose 5-phosphate-binding positions include Gly-156, 182–183, and 204–205; these read AG and NT.

Belongs to the ThiG family. As to quaternary structure, homotetramer. Forms heterodimers with either ThiH or ThiS.

The protein resides in the cytoplasm. The catalysed reaction is [ThiS sulfur-carrier protein]-C-terminal-Gly-aminoethanethioate + 2-iminoacetate + 1-deoxy-D-xylulose 5-phosphate = [ThiS sulfur-carrier protein]-C-terminal Gly-Gly + 2-[(2R,5Z)-2-carboxy-4-methylthiazol-5(2H)-ylidene]ethyl phosphate + 2 H2O + H(+). Its pathway is cofactor biosynthesis; thiamine diphosphate biosynthesis. Catalyzes the rearrangement of 1-deoxy-D-xylulose 5-phosphate (DXP) to produce the thiazole phosphate moiety of thiamine. Sulfur is provided by the thiocarboxylate moiety of the carrier protein ThiS. In vitro, sulfur can be provided by H(2)S. The protein is Thiazole synthase of Vibrio cholerae serotype O1 (strain ATCC 39541 / Classical Ogawa 395 / O395).